Consider the following 366-residue polypeptide: Protein sigma-NS (366 aa).

Residues 1–11 (MASSLRAAISK) form an important for ssRNA-binding and formation of complexes region.

The protein belongs to the orthoreovirus sigma-NS protein family. Homooligomer; in presence of RNA. Interacts with protein mu-NS; this interaction allows the localization of sigma-NS to the viral factories. Interacts with host G3BP1 (via C-terminus); this interaction induces the relocalization of G3BP1 and other SG proteins to the viral factories periphery.

It is found in the host cytoplasm. Protein that binds to ssRNA and participates with protein mu-NS in forming the matrix of viral factories, which are large inclusions in the host cytoplasm where replication intermediates are assembled and viral RNA replication takes place. Plays a role in the inhibition of the integrated stress response (ISR) to escape from host cell translational shutoff. Participates in the disruption of stress granules (SG) through its association with host G3BP1 and mu-NS. The sequence is that of Protein sigma-NS (S3) from Mammalia (T3D).